The primary structure comprises 120 residues: Large ribosomal subunit protein bL19 (120 aa).

Belongs to the bacterial ribosomal protein bL19 family.

In terms of biological role, this protein is located at the 30S-50S ribosomal subunit interface and may play a role in the structure and function of the aminoacyl-tRNA binding site. In Thermodesulfovibrio yellowstonii (strain ATCC 51303 / DSM 11347 / YP87), this protein is Large ribosomal subunit protein bL19.